Consider the following 294-residue polypeptide: ATP synthase gamma chain (294 aa).

This sequence belongs to the ATPase gamma chain family. As to quaternary structure, F-type ATPases have 2 components, CF(1) - the catalytic core - and CF(0) - the membrane proton channel. CF(1) has five subunits: alpha(3), beta(3), gamma(1), delta(1), epsilon(1). CF(0) has three main subunits: a, b and c.

It localises to the cell inner membrane. Produces ATP from ADP in the presence of a proton gradient across the membrane. The gamma chain is believed to be important in regulating ATPase activity and the flow of protons through the CF(0) complex. This chain is ATP synthase gamma chain, found in Rhizobium leguminosarum bv. trifolii (strain WSM2304).